The following is a 427-amino-acid chain: Glutamyl-tRNA reductase (427 aa).

Substrate-binding positions include 48-51 (TCNR), Ser99, 104-106 (EDQ), and Gln110. Cys49 functions as the Nucleophile in the catalytic mechanism. 179 to 184 (GAGEMG) contributes to the NADP(+) binding site.

This sequence belongs to the glutamyl-tRNA reductase family. Homodimer.

The enzyme catalyses (S)-4-amino-5-oxopentanoate + tRNA(Glu) + NADP(+) = L-glutamyl-tRNA(Glu) + NADPH + H(+). It functions in the pathway porphyrin-containing compound metabolism; protoporphyrin-IX biosynthesis; 5-aminolevulinate from L-glutamyl-tRNA(Glu): step 1/2. Its function is as follows. Catalyzes the NADPH-dependent reduction of glutamyl-tRNA(Glu) to glutamate 1-semialdehyde (GSA). This chain is Glutamyl-tRNA reductase, found in Methanocella arvoryzae (strain DSM 22066 / NBRC 105507 / MRE50).